We begin with the raw amino-acid sequence, 354 residues long: Peptide chain release factor 1 (354 aa).

Position 230 is an N5-methylglutamine (Gln-230).

Belongs to the prokaryotic/mitochondrial release factor family. Methylated by PrmC. Methylation increases the termination efficiency of RF1.

The protein localises to the cytoplasm. Peptide chain release factor 1 directs the termination of translation in response to the peptide chain termination codons UAG and UAA. This chain is Peptide chain release factor 1, found in Thermus thermophilus (strain ATCC BAA-163 / DSM 7039 / HB27).